A 118-amino-acid chain; its full sequence is Large ribosomal subunit protein bL20 (118 aa).

It belongs to the bacterial ribosomal protein bL20 family.

Functionally, binds directly to 23S ribosomal RNA and is necessary for the in vitro assembly process of the 50S ribosomal subunit. It is not involved in the protein synthesizing functions of that subunit. The chain is Large ribosomal subunit protein bL20 from Azotobacter vinelandii (strain DJ / ATCC BAA-1303).